Here is a 396-residue protein sequence, read N- to C-terminus: Tryptophan synthase beta chain (396 aa).

Lys-86 is subject to N6-(pyridoxal phosphate)lysine.

The protein belongs to the TrpB family. Tetramer of two alpha and two beta chains. Pyridoxal 5'-phosphate serves as cofactor.

The catalysed reaction is (1S,2R)-1-C-(indol-3-yl)glycerol 3-phosphate + L-serine = D-glyceraldehyde 3-phosphate + L-tryptophan + H2O. The protein operates within amino-acid biosynthesis; L-tryptophan biosynthesis; L-tryptophan from chorismate: step 5/5. The beta subunit is responsible for the synthesis of L-tryptophan from indole and L-serine. This chain is Tryptophan synthase beta chain, found in Yersinia enterocolitica serotype O:8 / biotype 1B (strain NCTC 13174 / 8081).